The sequence spans 481 residues: UDP-glycosyltransferase 73B3 (481 aa).

His-21 acts as the Proton acceptor in catalysis. His-21 serves as a coordination point for an anthocyanidin. The active-site Charge relay is the Asp-132. Residues Ala-355, Gln-357, His-372, Trp-375, Asn-376, Ser-377, and Glu-380 each contribute to the UDP-alpha-D-glucose site. Ala-395 contacts an anthocyanidin. UDP-alpha-D-glucose contacts are provided by Glu-396 and Gln-397.

The protein belongs to the UDP-glycosyltransferase family. Expressed in roots and flowers.

It carries out the reaction a flavonol + UDP-alpha-D-glucose = a flavonol 3-O-beta-D-glucoside + UDP + H(+). Possesses quercetin 3-O-glucosyltransferase activity in vitro. Also active in vitro on benzoates and benzoate derivatives. Involved in stress or defense responses. In Arabidopsis thaliana (Mouse-ear cress), this protein is UDP-glycosyltransferase 73B3 (UGT73B3).